Here is a 204-residue protein sequence, read N- to C-terminus: 3-isopropylmalate dehydratase small subunit (204 aa).

It belongs to the LeuD family. LeuD type 1 subfamily. In terms of assembly, heterodimer of LeuC and LeuD.

It catalyses the reaction (2R,3S)-3-isopropylmalate = (2S)-2-isopropylmalate. It functions in the pathway amino-acid biosynthesis; L-leucine biosynthesis; L-leucine from 3-methyl-2-oxobutanoate: step 2/4. In terms of biological role, catalyzes the isomerization between 2-isopropylmalate and 3-isopropylmalate, via the formation of 2-isopropylmaleate. This chain is 3-isopropylmalate dehydratase small subunit, found in Roseiflexus sp. (strain RS-1).